We begin with the raw amino-acid sequence, 113 residues long: Propane 2-monooxygenase, effector component (113 aa).

The protein belongs to the TmoD/XamoD family. As to quaternary structure, the propane 2-monooxygenase multicomponent enzyme system is composed of an electron transfer component and a monooxygenase component interacting with the effector protein PrmD. The electron transfer component is composed of a reductase (PrmB), and the monooxygenase component is formed by a large subunit (PrmA) and a small subunit (PrmC).

In terms of biological role, effector component of the propane 2-monooxygenase multicomponent enzyme system which is involved in the degradation of propane via the O2-dependent hydroxylation of propane. This Rhodococcus jostii (strain RHA1) protein is Propane 2-monooxygenase, effector component.